The sequence spans 448 residues: Probable glycine dehydrogenase (decarboxylating) subunit 1 (448 aa).

It belongs to the GcvP family. N-terminal subunit subfamily. The glycine cleavage system is composed of four proteins: P, T, L and H. In this organism, the P 'protein' is a heterodimer of two subunits.

The catalysed reaction is N(6)-[(R)-lipoyl]-L-lysyl-[glycine-cleavage complex H protein] + glycine + H(+) = N(6)-[(R)-S(8)-aminomethyldihydrolipoyl]-L-lysyl-[glycine-cleavage complex H protein] + CO2. The glycine cleavage system catalyzes the degradation of glycine. The P protein binds the alpha-amino group of glycine through its pyridoxal phosphate cofactor; CO(2) is released and the remaining methylamine moiety is then transferred to the lipoamide cofactor of the H protein. The chain is Probable glycine dehydrogenase (decarboxylating) subunit 1 from Listeria welshimeri serovar 6b (strain ATCC 35897 / DSM 20650 / CCUG 15529 / CIP 8149 / NCTC 11857 / SLCC 5334 / V8).